The primary structure comprises 403 residues: Acetate kinase (403 aa).

Asn7 contacts Mg(2+). Position 14 (Lys14) interacts with ATP. Arg90 is a substrate binding site. Asp147 acts as the Proton donor/acceptor in catalysis. Residues 207–211 (HIGNG), 283–285 (DMR), and 331–335 (GVGEN) each bind ATP. Glu386 provides a ligand contact to Mg(2+).

Belongs to the acetokinase family. In terms of assembly, homodimer. Mg(2+) serves as cofactor. It depends on Mn(2+) as a cofactor.

Its subcellular location is the cytoplasm. It carries out the reaction acetate + ATP = acetyl phosphate + ADP. Its pathway is metabolic intermediate biosynthesis; acetyl-CoA biosynthesis; acetyl-CoA from acetate: step 1/2. Its function is as follows. Catalyzes the formation of acetyl phosphate from acetate and ATP. Can also catalyze the reverse reaction. Phosphorylates propionate (54%) in addition to acetate (100%). Uses GTP (100%), ITP (163%), UTP (56%), and CTP (21%) as phosphoryl donors in addition to ATP (100%). The sequence is that of Acetate kinase from Thermotoga maritima (strain ATCC 43589 / DSM 3109 / JCM 10099 / NBRC 100826 / MSB8).